A 206-amino-acid polypeptide reads, in one-letter code: Small ribosomal subunit protein uS4 (206 aa).

The S4 RNA-binding domain occupies 96–158; sequence GRLDNVVYRM…AKQQTRIKAA (63 aa).

This sequence belongs to the universal ribosomal protein uS4 family. As to quaternary structure, part of the 30S ribosomal subunit. Contacts protein S5. The interaction surface between S4 and S5 is involved in control of translational fidelity.

Its function is as follows. One of the primary rRNA binding proteins, it binds directly to 16S rRNA where it nucleates assembly of the body of the 30S subunit. Functionally, with S5 and S12 plays an important role in translational accuracy. The chain is Small ribosomal subunit protein uS4 from Vibrio vulnificus (strain CMCP6).